The sequence spans 149 residues: MADNARAARMAKRIQTIVASAIERDIKDRRLEFVTITDVTMTGDLHDAKVFYTVRGASIEEEPDLEAAAEALHRARGQLRKIVGQQLGVRFTPTLTYSIDTVPEASAHMEALLDRARKRDEELAKLREGAVPAGDADPYKTSSKSESEE.

The interval 124-149 is disordered; the sequence is AKLREGAVPAGDADPYKTSSKSESEE.

This sequence belongs to the RbfA family. Monomer. Binds 30S ribosomal subunits, but not 50S ribosomal subunits or 70S ribosomes.

It localises to the cytoplasm. In terms of biological role, one of several proteins that assist in the late maturation steps of the functional core of the 30S ribosomal subunit. Associates with free 30S ribosomal subunits (but not with 30S subunits that are part of 70S ribosomes or polysomes). Required for efficient processing of 16S rRNA. May interact with the 5'-terminal helix region of 16S rRNA. This is Ribosome-binding factor A from Corynebacterium glutamicum (strain R).